The primary structure comprises 349 residues: Spermidine/putrescine import ATP-binding protein PotA (349 aa).

An ABC transporter domain is found at Ile-7–Ile-237. An ATP-binding site is contributed by Gly-39–Thr-46.

Belongs to the ABC transporter superfamily. Spermidine/putrescine importer (TC 3.A.1.11.1) family. In terms of assembly, the complex is composed of two ATP-binding proteins (PotA), two transmembrane proteins (PotB and PotC) and a solute-binding protein (PotD).

It is found in the cell membrane. It catalyses the reaction ATP + H2O + polyamine-[polyamine-binding protein]Side 1 = ADP + phosphate + polyamineSide 2 + [polyamine-binding protein]Side 1.. Functionally, part of the ABC transporter complex PotABCD involved in spermidine/putrescine import. Responsible for energy coupling to the transport system. This Clostridium perfringens (strain SM101 / Type A) protein is Spermidine/putrescine import ATP-binding protein PotA.